The primary structure comprises 217 residues: Ras-related protein Rab-19 (217 aa).

GTP is bound by residues S26, V28, G29, K30, T31, C32, Y42, T43, E44, T45, and T49. T31 contributes to the Mg(2+) binding site. The Switch 1 motif lies at S39–F54. Mg(2+) contacts are provided by T49 and D72. Residues A74–S89 carry the Switch 2 motif. GTP contacts are provided by G75, N130, K131, D133, S161, A162, and K163. S-geranylgeranyl cysteine attachment occurs at residues C215 and C217. C217 is subject to Cysteine methyl ester.

Belongs to the small GTPase superfamily. Rab family. Requires Mg(2+) as cofactor.

It is found in the cell membrane. It catalyses the reaction GTP + H2O = GDP + phosphate + H(+). Regulated by guanine nucleotide exchange factors (GEFs) which promote the exchange of bound GDP for free GTP. Regulated by GTPase activating proteins (GAPs) which increase the GTP hydrolysis activity. Inhibited by GDP dissociation inhibitors (GDIs). In terms of biological role, the small GTPases Rab are key regulators of intracellular membrane trafficking, from the formation of transport vesicles to their fusion with membranes. Rabs cycle between an inactive GDP-bound form and an active GTP-bound form that is able to recruit to membranes different set of downstream effectors directly responsible for vesicle formation, movement, tethering and fusion. The chain is Ras-related protein Rab-19 from Homo sapiens (Human).